Consider the following 96-residue polypeptide: MKKPSQLSATILTIFVILAIGVMVKETLGQAPSTCFEALKDASKGASCDSELCASLCKKKSGGGVGTCRTKTTQPSKGQPECHCRFWCKSDGTPYK.

Residues 1 to 29 (MKKPSQLSATILTIFVILAIGVMVKETLG) form the signal peptide. Cystine bridges form between C35-C88, C48-C68, C53-C82, and C57-C84.

Belongs to the DEFL family.

It localises to the secreted. The protein is Defensin-like protein 151 (LCR17) of Arabidopsis thaliana (Mouse-ear cress).